The sequence spans 169 residues: Anaerobic nitrite reductase NSHB2 (169 aa).

The region spanning 16-166 is the Globin domain; the sequence is SFSEEQEALV…LVAAIKQEMK (151 aa). A Homodimerization motif is present at residues 49–53; that stretch reads EVAPS. Heme b contacts are provided by Ser59, Lys73, His77, Arg107, Thr111, and His112. Residues 119-131 carry the Homodimerization motif; it reads DAHFEVTRFALLE.

This sequence belongs to the plant globin family. Homodimer. The cofactor is heme b. As to expression, expressed in leaves, but not in roots. Present in embryonic organs including embryos, coleoptiles and seminal roots.

It is found in the cytoplasm. The protein localises to the nucleus. The enzyme catalyses Fe(III)-heme b-[protein] + nitric oxide + H2O = Fe(II)-heme b-[protein] + nitrite + 2 H(+). Phytoglobin that reduces nitrite to nitric oxide under anoxic conditions (e.g. during flooding or in waterlogged soil). May not function as an oxygen storage or transport protein. Has an unusually high affinity for O(2) through an hexacoordinate heme iron because of a very low dissociation constant. Promotes tolerance to low potassium K(+) conditions. The protein is Anaerobic nitrite reductase NSHB2 of Oryza sativa subsp. japonica (Rice).